The sequence spans 402 residues: Subtilisin-like protease 9 (402 aa).

The first 18 residues, 1–18 (MGFFRILFSLSLCALSLA), serve as a signal peptide directing secretion. Residues 19 to 120 (IPSKLIGLEN…VEVDRVVKLD (102 aa)) constitute a propeptide that is removed on maturation. The region spanning 36 to 119 (SYIVVMKSAV…YVEVDRVVKL (84 aa)) is the Inhibitor I9 domain. Positions 130–402 (SWGLGRISHR…KKLLYNGSGA (273 aa)) constitute a Peptidase S8 domain. Active-site charge relay system residues include aspartate 162 and histidine 193. An N-linked (GlcNAc...) asparagine glycan is attached at asparagine 254. Serine 348 serves as the catalytic Charge relay system. Residues asparagine 390 and asparagine 398 are each glycosylated (N-linked (GlcNAc...) asparagine).

This sequence belongs to the peptidase S8 family.

The protein localises to the secreted. In terms of biological role, secreted subtilisin-like serine protease with keratinolytic activity that contributes to pathogenicity. This is Subtilisin-like protease 9 (SUB9) from Arthroderma gypseum (strain ATCC MYA-4604 / CBS 118893) (Microsporum gypseum).